The primary structure comprises 729 residues: Adenosylcobalamin-dependent ribonucleoside-triphosphate reductase (729 aa).

Cysteines 189 and 438 form a disulfide. Residues Cys-427 and Glu-429 contribute to the active site.

It belongs to the class II ribonucleoside-triphosphate reductase family. In terms of assembly, monomer. It depends on adenosylcob(III)alamin as a cofactor.

It catalyses the reaction a 2'-deoxyribonucleoside 5'-triphosphate + [thioredoxin]-disulfide + H2O = a ribonucleoside 5'-triphosphate + [thioredoxin]-dithiol. The sequence is that of Adenosylcobalamin-dependent ribonucleoside-triphosphate reductase (rnr) from Euglena gracilis.